The sequence spans 218 residues: Peptidase E (218 aa).

Active-site charge relay system residues include S123, D138, and H160.

This sequence belongs to the peptidase S51 family.

It is found in the cytoplasm. It catalyses the reaction Dipeptidase E catalyzes the hydrolysis of dipeptides Asp-|-Xaa. It does not act on peptides with N-terminal Glu, Asn or Gln, nor does it cleave isoaspartyl peptides.. In terms of biological role, hydrolyzes dipeptides containing N-terminal aspartate residues. May play a role in allowing the cell to use peptide aspartate to spare carbon otherwise required for the synthesis of the aspartate family of amino acids. The protein is Peptidase E of Haemophilus influenzae (strain ATCC 51907 / DSM 11121 / KW20 / Rd).